A 329-amino-acid polypeptide reads, in one-letter code: Interleukin-12 subunit beta (329 aa).

Positions 1 to 22 (MCHQWLVLSWFSLVLLASPLMA) are cleaved as a signal peptide. The Ig-like C2-type domain maps to 29–106 (DVYVVELDWY…LSHSHLLLHK (78 aa)). Cysteine 50 and cysteine 90 are joined by a disulfide. N-linked (GlcNAc...) asparagine glycosylation is found at asparagine 125, asparagine 135, and asparagine 223. In terms of domain architecture, Fibronectin type-III spans 238 to 329 (PPKNLQLKPL…WSEWASVSCS (92 aa)).

It belongs to the IL-12B family. Heterodimer with IL12A; disulfide-linked. The heterodimer is known as interleukin IL-12. Heterodimer with IL23A; disulfide-linked. The heterodimer is known as interleukin IL-23. Also secreted as a monomer. Interacts with NBR1; this interaction promotes IL-12 secretion.

The protein resides in the secreted. Cytokine that can act as a growth factor for activated T and NK cells, enhance the lytic activity of NK/lymphokine-activated killer cells, and stimulate the production of IFN-gamma by resting PBMC. In terms of biological role, associates with IL23A to form the IL-23 interleukin, a heterodimeric cytokine which functions in innate and adaptive immunity. IL-23 may constitute with IL-17 an acute response to infection in peripheral tissues. IL-23 binds to a heterodimeric receptor complex composed of IL12RB1 and IL23R, activates the Jak-Stat signaling cascade, stimulates memory rather than naive T-cells and promotes production of pro-inflammatory cytokines. IL-23 induces autoimmune inflammation and thus may be responsible for autoimmune inflammatory diseases and may be important for tumorigenesis. This is Interleukin-12 subunit beta (IL12B) from Equus caballus (Horse).